A 967-amino-acid polypeptide reads, in one-letter code: A disintegrin and metalloproteinase with thrombospondin motifs 1 (967 aa).

2 disordered regions span residues 1–27 and 192–250; these read MQRA…APGS and GDVG…SIRK. The signal sequence occupies residues 1–49; that stretch reads MQRAVPEGFGRRKLGSDMGNAERAPGSRSFGPVPTLLLLAAALLAVSDA. A propeptide spanning residues 50 to 252 is cleaved from the precursor; sequence LGRPSEEDEE…TGTGSIRKKR (203 aa). The short motif at 196-203 is the Cysteine switch element; sequence GTCGVVDD. Position 198 (cysteine 198) interacts with Zn(2+). Over residues 203–212 the composition is skewed to basic and acidic residues; it reads DEPRPTGKAE. Acidic residues predominate over residues 213 to 226; that stretch reads TEDEDEGTEGEDEG. Residues 258–467 enclose the Peptidase M12B domain; that stretch reads RYVETMLVAD…GHGECLMDKP (210 aa). Residues glutamate 261, aspartate 344, and aspartate 351 each coordinate Ca(2+). 4 cysteine pairs are disulfide-bonded: cysteine 333-cysteine 385, cysteine 362-cysteine 367, cysteine 379-cysteine 462, and cysteine 417-cysteine 446. Histidine 401 provides a ligand contact to Zn(2+). Glutamate 402 is an active-site residue. Residues histidine 405 and histidine 411 each coordinate Zn(2+). Residues cysteine 462 and aspartate 465 each coordinate Ca(2+). Residues 476 to 559 form the Disintegrin domain; the sequence is DLPGTSYDAN…DRKHFDTPFH (84 aa). Intrachain disulfides connect cysteine 488–cysteine 511, cysteine 499–cysteine 521, cysteine 506–cysteine 540, and cysteine 534–cysteine 545. An N-linked (GlcNAc...) asparagine glycan is attached at asparagine 547. A TSP type-1 1 domain is found at 559 to 614; that stretch reads HGSWGMWGPWGDCSRTCGGGVQYTMRECDNPVPKNGGKYCEGKRVRYRSCNLEDCP. Disulfide bonds link cysteine 571-cysteine 608, cysteine 575-cysteine 613, and cysteine 586-cysteine 598. 2 N-linked (GlcNAc...) asparagine glycosylation sites follow: asparagine 720 and asparagine 764. The tract at residues 725 to 849 is spacer; that stretch reads KKISGSVTSA…YFVKKKKESF (125 aa). TSP type-1 domains follow at residues 854 to 905 and 908 to 967; these read TFSA…RPCA and PCPQ…AECS.

The cofactor is Zn(2+). In terms of processing, the precursor is cleaved by a furin endopeptidase. Glycosylated. Can be O-fucosylated by POFUT2 on a serine or a threonine residue found within the consensus sequence C1-X(2)-(S/T)-C2-G of the TSP type-1 repeat domains where C1 and C2 are the first and second cysteine residue of the repeat, respectively. Fucosylated repeats can then be further glycosylated by the addition of a beta-1,3-glucose residue by the glucosyltransferase, B3GALTL. Fucosylation mediates the efficient secretion of ADAMTS family members. Can also be C-glycosylated with one or two mannose molecules on tryptophan residues within the consensus sequence W-X-X-W of the TPRs, and N-glycosylated. These other glycosylations can also facilitate secretion.

The protein resides in the secreted. Its subcellular location is the extracellular space. It is found in the extracellular matrix. Functionally, metalloprotease which cleaves aggrecan, a cartilage proteoglycan, at the '1938-Glu-|-Leu-1939' site (within the chondroitin sulfate attachment domain), and may be involved in its turnover. Also cleaves COMP. Has angiogenic inhibitor activity. May play a critical role in follicular rupture. This chain is A disintegrin and metalloproteinase with thrombospondin motifs 1 (ADAMTS1), found in Homo sapiens (Human).